The primary structure comprises 226 residues: V-type proton ATPase subunit E (226 aa).

The protein belongs to the V-ATPase E subunit family. V-ATPase is a heteromultimeric enzyme made up of two complexes: the ATP-hydrolytic V1 complex and the proton translocation V0 complex. The V1 complex consists of three catalytic AB heterodimers that form a heterohexamer, three peripheral stalks each consisting of EG heterodimers, one central rotor including subunits D and F, and the regulatory subunits C and H. The proton translocation complex V0 consists of the proton transport subunit a, a ring of proteolipid subunits c9c'', rotary subunit d, subunits e and f, and the accessory subunits VhaAC45 and ATP6AP2.

Its function is as follows. Subunit of the V1 complex of vacuolar(H+)-ATPase (V-ATPase), a multisubunit enzyme composed of a peripheral complex (V1) that hydrolyzes ATP and a membrane integral complex (V0) that translocates protons. V-ATPase is responsible for acidifying and maintaining the pH of intracellular compartments and in some cell types, is targeted to the plasma membrane, where it is responsible for acidifying the extracellular environment. The sequence is that of V-type proton ATPase subunit E (VHA26) from Manduca sexta (Tobacco hawkmoth).